The chain runs to 314 residues: Bifunctional pinoresinol-lariciresinol reductase (314 aa).

NADP(+)-binding positions include 10–16 (GGTGYIG), Arg35, and Lys44. Lys138 acts as the Proton acceptor in catalysis. NADP(+) is bound at residue Arg142. Residue His270 coordinates substrate.

Belongs to the NmrA-type oxidoreductase family. Isoflavone reductase subfamily. In terms of assembly, dimer.

The catalysed reaction is (+)-lariciresinol + NADP(+) = (+)-pinoresinol + NADPH + H(+). It carries out the reaction (+)-secoisolariciresinol + NADP(+) = (-)-lariciresinol + NADPH + H(+). Reductase involved in the lignan justicidin B biosynthesis. Catalyzes the enantioselective conversion of (+)-pinoresinol into (+)-lariciresinol and of (-)-lariciresinol into (+)-secoisolariciresinol. Low activity with the other enantiomers. Abstracts the 4R-hydride from the NADPH cofactor during catalysis. The sequence is that of Bifunctional pinoresinol-lariciresinol reductase (PLR_Lp1) from Linum perenne (Perennial flax).